An 84-amino-acid chain; its full sequence is U21-theraphotoxin-Cg1b (84 aa).

An N-terminal signal peptide occupies residues 1 to 21; sequence MKVSVLITLAVLGVMFLLTSA. Residues 22-47 constitute a propeptide that is removed on maturation; the sequence is EERGSDQMDSPAWLKSMERIFQSEER. 3 cysteine pairs are disulfide-bonded: Cys49–Cys63, Cys56–Cys68, and Cys62–Cys76. Phe82 is subject to Phenylalanine amide.

Belongs to the neurotoxin 10 (Hwtx-1) family. 05 (F4a) subfamily. As to expression, expressed by the venom gland.

The protein localises to the secreted. Functionally, probable ion channel inhibitor. This Chilobrachys guangxiensis (Chinese earth tiger tarantula) protein is U21-theraphotoxin-Cg1b.